Consider the following 2104-residue polypeptide: MRWVPLVLLPLIASAATTYQHRQTYSSLQCRVNDPLSCNQAKSEVCVFVNGQYRCECPVGVSRLADGRCLVVNECARPSLNACHKDAQCVDLAEGYTCRCNSGFADTSPDKVNKPGRQCQKTTNECGAKQTYGVDCDENAACVDTPEGFQCVCQPGYADVSTSISKLPGRKCVESVNECTNGEADCSNNADCFDRADGYECKCRPGFVDASPNVDKYPGRVCNKPKAPEYYGQQSRQPQCSEGSGCGPNEECRFNTAGEKVCQCRRGSVQQSNGVCKVFSQCEQANECDRNAFCSNTYDGPKCQCKDGFLDVSPDPVRLPGRKCQQVRNECADGSHDCSHQAACQDTPTGYICSCNSNCIDVSSRYNLPPGRKCSVAANQCSDKSLNSCDENADCVQLPDGYTCKCFAGYVDVSSNANLPPGRVCTLSTACPAQPTDLVFLIDGSGSIGSYVFQTEVLRFLAEFTELFDIAPQKTRVSVVQYSDQIRHEFGLDNYSDRKSLQNAIRNIEYLTGLTRTGAAIEHVANEAFSERRGARPVGQVSRVAIVITDGRSQDNVTRPSDNARRQDIQLFAVGVTNHVLDAELEEISGSKDRTFHVSGFEDLNTRLRSAIQRVACPHQNNEDTYNKGPCDPSNHNGCDRSLNQVCQQKNGKFVCACPAGFDIHPVTKVCGGDICNPEIATSCPDPEICEKTPFGNWRCTCPADLGWRDRLTGVCKIGEKPVQTSESNDECSPNDVHSCPANSKCEKGAGGEFICKCDAGFQRNGRTNKCEAPGTCDPRMPDSCDARKKEKCLPDGRGAFACMCDRHHKRHPVTDICLIDECAAGVADCDPNAKCTDTDESYICTCNEGFLDKSPEQNKKPGRVCSKQRNECLDGTHNCSMNADCIDLPDGFLCRCKEDFVDISPNPNAFGGIDCRALVNECLITGGHNCHEHAICIDTRDSYKCQCKEGYVDHDELRNPGRTCKKLNQICESGKHECDKNARCVEKGANDYECVCNAGFIDKSPLTHRPGRKCVEPICSDDSKHDCHSAAICEENDSVPEKYTCKCRDGYLDVGAVMGGGKSGRECKELVNECLSASLNSCDAAATCIDLDDGYTCKCPLGSKDESPVPKLPGRSCKGLVNECNIPHLNNCSHFATCIDLEEGYECKCKPEYHDQKPEQPGTECKFIINECLAENLNDCSPNAMCIDKIDGYDCKCKAPFQDEMPSNPGRICRFDECADPKDNDCDKHALCIDTDDSYTCQCKEGFFDEISDPKKPGRVCIGLVIEPQNQSEDPTTPDPNTIKCGNGLCHLDLGEVCVGGATCSCRPGESRDNEKEKCVPTTSIPLVVRVMEYDGEPIQYRTDYSKPDTQAHIEIVDAVKKSVGKIIGKTDVAPRFVTTDVNYITNPKVQNSEWDKGLLGNVSVHLAGKEEVDKCRFYEQFAEIVREMGGRVDRIKLSDDADLDPCKKEEEKKGIPCGNTFCSIELGEECIAGKICGCPKGQKRKDANSPCRAVESWNLPLYVIRDGHEKITYSPSLSNPLNDDHKDLVSRFESGVAQSYDKTPLKGAFVTAEVNEIENPESRKKSWDTGILYNFTSHFVKGSVAEPASVFTDLIDYIQKRNDFEVGKSKLFISPEQLNPFSNCYHSDCHPDAICKEVGKGYTCTCPDGFRDLNPSRPGRNCLSYRGVNECEKPELNECSPHARCIDLDYLYKCECIRPYVNSAVGDALPGSVCSIDYCQDVNYCPLNSTCVNVDEQARCDCKPGFVDLRKSGHLSEAGLGESICRRQSDIDECALGLHNCSAAAICIDKKIGYECQCQEGYEDGNPSQPGRICAASLCGLCNGHGDCIHDALSSNVTCACLDGYTGQFCETAPSNLPLILMTLLALLFLLLTLLCCLYMCARCRCFGARGRSEGSASGQEILGSDYYTIPRAKLARPLYGDEMGDDHAGALAAYLDDGASISSDGSIEEIERRVTTDVTTREVRTTTVRDDDGNIISQSQTISHGNPHETDTEQYGMISSDHYKTSASEAMDAAMSTSASGAAYNQSSGAMMSSASGHKSAYNQGYASDSEDSDAGHAVYDRTTRTNQSHDFEPGADPRTGTERSKREFVTTTKAEEVNYF.

The signal sequence occupies residues Met1–Ala15. The Extracellular segment spans residues Ala16–Pro1860. EGF-like domains follow at residues Val71–Asp110, Thr122–Ser163, and Ser175–Asn213. Disulfide bonds link Cys75–Cys89, Cys83–Cys98, Cys126–Cys142, Cys136–Cys151, Cys179–Cys192, and Cys186–Cys201. One can recognise a WR1 domain in the interval Arg220 to Arg265. 3 consecutive EGF-like domains span residues Val278 to Asp315, Val327 to Ile360, and Ala377 to Asn416. Cystine bridges form between Cys282–Cys294, Cys288–Cys303, Cys331–Cys344, Cys338–Cys353, Cys355–Cys359, Cys381–Cys395, and Cys389–Cys404. One can recognise a VWFA domain in the interval Asp437–Ile612. N-linked (GlcNAc...) asparagine glycans are attached at residues Asn494 and Asn556. EGF-like domains follow at residues Ser728–Glu772 and Leu819–Glu857. 21 cysteine pairs are disulfide-bonded: Cys732–Cys746, Cys740–Cys756, Cys758–Cys771, Cys823–Cys836, Cys830–Cys845, Cys873–Cys886, Cys880–Cys895, Cys923–Cys937, Cys931–Cys946, Cys972–Cys985, Cys979–Cys995, Cys1020–Cys1034, Cys1028–Cys1046, Cys1075–Cys1089, Cys1083–Cys1098, Cys1125–Cys1139, Cys1133–Cys1148, Cys1173–Cys1187, Cys1181–Cys1196, Cys1219–Cys1233, and Cys1227–Cys1242. Residues Gln869 to Asn907 enclose the EGF-like 9; calcium-binding domain. Asn879 carries an N-linked (GlcNAc...) asparagine glycan. 7 EGF-like domains span residues Leu919 to Leu958, Leu968 to Leu1007, Val1016 to Val1058, Leu1071 to Val1110, Leu1121 to Glu1160, Ile1169 to Ser1208, and Arg1215 to Asp1254. Residue Asn1037 is glycosylated (N-linked (GlcNAc...) asparagine). N-linked (GlcNAc...) asparagine glycosylation occurs at Asn1132. Residues Asn1271, Asn1403, and Asn1576 are each glycosylated (N-linked (GlcNAc...) asparagine). SEA domains lie at Pro1322–Asp1444 and Ala1495–Leu1620. 3 EGF-like domains span residues Pro1622 to Ser1658, Gly1669 to Ser1705, and Ser1717 to Ser1754. 11 cysteine pairs are disulfide-bonded: Cys1626/Cys1637, Cys1631/Cys1646, Cys1673/Cys1687, Cys1681/Cys1696, Cys1721/Cys1733, Cys1727/Cys1742, Cys1776/Cys1789, Cys1783/Cys1798, Cys1821/Cys1830, Cys1824/Cys1841, and Cys1843/Cys1852. N-linked (GlcNAc...) asparagine glycans are attached at residues Asn1730 and Asn1782. The EGF-like 20; calcium-binding domain occupies Asp1772–Ser1810. The EGF-like 21 domain occupies Ala1817–Glu1853. Residue Asn1838 is glycosylated (N-linked (GlcNAc...) asparagine). The helical transmembrane segment at Leu1861 to Tyr1881 threads the bilayer. Topologically, residues Met1882–Phe2104 are cytoplasmic. Positions Ser2031–Gly2040 are enriched in low complexity. Residues Ser2031–Phe2104 form a disordered region. Composition is skewed to basic and acidic residues over residues Val2062–Glu2076 and Thr2083–Phe2104.

Abundant at hypodermal cell-matrix junctions overlying muscle of threefold embryos. Expression continues in body wall muscle in larvae and adults and is also detected in other regions where cells show mechanical attachment to the hypodermis including the inner surface of the pharynx, overlying anal and intestinal muscles, overlying vulval and uterine sex muscles, male tail muscle attachment zones and the six mechanosensory neurons (at protein level).

It localises to the cell junction. Its subcellular location is the hemidesmosome. The protein resides in the cytoplasm. The protein localises to the cytoskeleton. It is found in the cell membrane. Functionally, required for junctional attachments between hypodermis and muscle, and between the apical epithelial surface and the cuticular matrix. Essential for enclosure of the embryo by the hypodermis, hypodermal integrity, embryo elongation, and maintenance of hypodermal morphology in fully elongated embryos. This chain is Transmembrane matrix receptor MUP-4, found in Caenorhabditis elegans.